Consider the following 473-residue polypeptide: 3-isopropylmalate dehydratase large subunit 2 (473 aa).

Residues cysteine 350, cysteine 410, and cysteine 413 each coordinate [4Fe-4S] cluster.

Belongs to the aconitase/IPM isomerase family. LeuC type 1 subfamily. In terms of assembly, heterodimer of LeuC and LeuD. [4Fe-4S] cluster is required as a cofactor.

The catalysed reaction is (2R,3S)-3-isopropylmalate = (2S)-2-isopropylmalate. Its pathway is amino-acid biosynthesis; L-leucine biosynthesis; L-leucine from 3-methyl-2-oxobutanoate: step 2/4. Catalyzes the isomerization between 2-isopropylmalate and 3-isopropylmalate, via the formation of 2-isopropylmaleate. The chain is 3-isopropylmalate dehydratase large subunit 2 from Salmonella typhimurium (strain LT2 / SGSC1412 / ATCC 700720).